The following is a 562-amino-acid chain: Dihydroxy-acid dehydratase (562 aa).

Position 80 (D80) interacts with Mg(2+). Residue C121 participates in [2Fe-2S] cluster binding. Residues D122 and K123 each contribute to the Mg(2+) site. N6-carboxylysine is present on K123. C194 contacts [2Fe-2S] cluster. E446 lines the Mg(2+) pocket. S472 serves as the catalytic Proton acceptor.

This sequence belongs to the IlvD/Edd family. Homodimer. [2Fe-2S] cluster serves as cofactor. Requires Mg(2+) as cofactor.

It carries out the reaction (2R)-2,3-dihydroxy-3-methylbutanoate = 3-methyl-2-oxobutanoate + H2O. The catalysed reaction is (2R,3R)-2,3-dihydroxy-3-methylpentanoate = (S)-3-methyl-2-oxopentanoate + H2O. Its pathway is amino-acid biosynthesis; L-isoleucine biosynthesis; L-isoleucine from 2-oxobutanoate: step 3/4. The protein operates within amino-acid biosynthesis; L-valine biosynthesis; L-valine from pyruvate: step 3/4. Functionally, functions in the biosynthesis of branched-chain amino acids. Catalyzes the dehydration of (2R,3R)-2,3-dihydroxy-3-methylpentanoate (2,3-dihydroxy-3-methylvalerate) into 2-oxo-3-methylpentanoate (2-oxo-3-methylvalerate) and of (2R)-2,3-dihydroxy-3-methylbutanoate (2,3-dihydroxyisovalerate) into 2-oxo-3-methylbutanoate (2-oxoisovalerate), the penultimate precursor to L-isoleucine and L-valine, respectively. This Staphylococcus aureus (strain MRSA252) protein is Dihydroxy-acid dehydratase.